Consider the following 556-residue polypeptide: MNSLEQVKGLIKEEIQAAVLKAELATEEQIPNVVLESPKDKTNGDFSTNMAMQLARVAKKAPRMIAEELVANFDKAKASIEKIEIAGPGFINFYMDNSYLTDLIPTIVNAGEAYGETSTGKGEKVQVEFVSANPTGDLHLGHARGAAVGDTLCNLLAKAGYDVSREYYINDAGNQIHNLALSVEARYMQALGLEKEMPEDGYHGADIIAIGKRLAEEFGDRYAKADEKESYEFYREYGLKYELAKLQKDLESFRVKFDVWFSETSLYKNGKIDQALAVLKERDEIFEEDGATWFRSMTYGDDKNRVLIKNDGSYTYLTPDIAYHRDKLERGFDKLINIWGADHHGYIPRMKAAIQALGYDKETLEVEIIQMVQLYQNGEKMKMSKRTGKAVTLRELMEEVGVDAMRYFFAMRSGDSHLDFDMDLAVSKSNENPVYYAQYAHARVCSILRQGEELGLATGGDVNYKLVTSEKEVELLKKLGEFPAVVADAAQKRLPHRITNYAFELAAALHSFYNAEKVLNQDNLELSKARYELMKAVRTTLQNALAIVGVSAPEKM.

The short motif at 132–142 (ANPTGDLHLGH) is the 'HIGH' region element.

This sequence belongs to the class-I aminoacyl-tRNA synthetase family. Monomer.

It localises to the cytoplasm. The enzyme catalyses tRNA(Arg) + L-arginine + ATP = L-arginyl-tRNA(Arg) + AMP + diphosphate. This Bacillus cereus (strain ATCC 10987 / NRS 248) protein is Arginine--tRNA ligase.